The primary structure comprises 328 residues: Probable nicotianamine synthase 6 (328 aa).

Belongs to the nicotianamine synthase (NAS)-like family.

It carries out the reaction 3 S-adenosyl-L-methionine = nicotianamine + 3 S-methyl-5'-thioadenosine + 3 H(+). In terms of biological role, synthesizes nicotianamine, a polyamine that is the first intermediate in the synthesis of the phytosiderophores of the mugineic acid type found in gramineae which serves as a sensor for the physiological iron status within the plant, and/or might be involved in the transport of iron. This Hordeum vulgare (Barley) protein is Probable nicotianamine synthase 6 (NAS6).